The primary structure comprises 279 residues: 1-(5-phosphoribosyl)-5-[(5-phosphoribosylamino)methylideneamino] imidazole-4-carboxamide isomerase (279 aa).

Belongs to the HisA/HisF family.

The protein localises to the cytoplasm. It carries out the reaction 1-(5-phospho-beta-D-ribosyl)-5-[(5-phospho-beta-D-ribosylamino)methylideneamino]imidazole-4-carboxamide = 5-[(5-phospho-1-deoxy-D-ribulos-1-ylimino)methylamino]-1-(5-phospho-beta-D-ribosyl)imidazole-4-carboxamide. It participates in amino-acid biosynthesis; L-histidine biosynthesis; L-histidine from 5-phospho-alpha-D-ribose 1-diphosphate: step 4/9. This chain is 1-(5-phosphoribosyl)-5-[(5-phosphoribosylamino)methylideneamino] imidazole-4-carboxamide isomerase (HIS6), found in Candida albicans (Yeast).